The primary structure comprises 572 residues: DNA polymerase (572 aa).

Residues 1–222 (MPRKMYSCDF…LGLDKEVRYA (222 aa)) form a 3'-5' exonuclease and strand displacement activities region. The interval 56 to 66 (YFHNLKFDGAF) is interaction with the primer terminal protein. D142 and D166 together coordinate Mg(2+). The interval 223 to 226 (YRGG) is DNA-binding; Involved in the formation of a stable complex between TP and phi29 DNA polymerase. Residues 227 to 572 (FTWLNDRFKE…VLVDDTFTIK (346 aa)) form an initiation, polymerization and pyrophosphorolytic activities region. Residues D246 and V247 each contribute to the Mg(2+) site. Positions 251, 368, and 380 each coordinate 5-methyl-UTP. The Mg(2+) site is built by D453 and D455. D455 is a binding site for 5-methyl-UTP.

Belongs to the DNA polymerase type-B family. Interacts with the primer terminal protein; this interaction allows the initiation of TP-primed DNA replication at both viral DNA ends. Interacts with DNA. Mg(2+) is required as a cofactor.

The catalysed reaction is DNA(n) + a 2'-deoxyribonucleoside 5'-triphosphate = DNA(n+1) + diphosphate. Its function is as follows. Polymerase responsible for protein-primed viral DNA replication by strand displacement with high processivity and fidelity. To start replication, the DNA polymerase forms a heterodimer with a free primer terminal protein (TP), recognizes the replication origins at both 5' ends of the linear chromosome, and initiates replication using as primer the OH-group of Ser-232 of the TP. This polymerase possesses three enzymatic activities: DNA synthesis (polymerase), primer terminal protein (TP) deoxynucleotidylation, which is the formation of a covalent linkage (phosphoester) between the hydroxyl group of a specific serine residue in TP and 5'-dAMP, a reaction directed by the second T at the 3' end, and 3' to 5' exonuclease activity. Exonuclease activity has a proofreading purpose. The protein is DNA polymerase (2) of Bacillus subtilis (Bacteriophage PZA).